An 808-amino-acid chain; its full sequence is ATP-dependent 6-phosphofructokinase (808 aa).

A disordered region spans residues 1-21 (MSSTQAPVEPPKRRRIGVLTS). The interval 1 to 389 (MSSTQAPVEP…YHFAYRNTAT (389 aa)) is N-terminal catalytic PFK domain 1. Residues Gly-23, 86 to 87 (RS), and 116 to 119 (GDGS) each bind ATP. Asp-117 is a Mg(2+) binding site. Residues 162–164 (SID), Arg-199, 206–208 (MGR), Glu-263, Arg-291, and 297–300 (HTQR) each bind substrate. Residue Asp-164 is the Proton acceptor of the active site. The segment at 390-403 (PDHPKMILPQDKRM) is interdomain linker. The C-terminal regulatory PFK domain 2 stretch occupies residues 404 to 808 (RIAIIHVGAP…DIDPSALTSS (405 aa)). Residues Arg-480, 537–541 (TISNN), Arg-575, 582–584 (QGG), Glu-642, Arg-668, 674–677 (HFQQ), and Arg-749 each bind beta-D-fructose 2,6-bisphosphate.

It belongs to the phosphofructokinase type A (PFKA) family. ATP-dependent PFK group I subfamily. Eukaryotic two domain clade 'E' sub-subfamily. Homotetramer. The cofactor is Mg(2+).

It is found in the cytoplasm. It catalyses the reaction beta-D-fructose 6-phosphate + ATP = beta-D-fructose 1,6-bisphosphate + ADP + H(+). The protein operates within carbohydrate degradation; glycolysis; D-glyceraldehyde 3-phosphate and glycerone phosphate from D-glucose: step 3/4. Its activity is regulated as follows. Allosterically activated by ADP, AMP, or fructose 2,6-bisphosphate, and allosterically inhibited by ATP or citrate. Its function is as follows. Catalyzes the phosphorylation of D-fructose 6-phosphate to fructose 1,6-bisphosphate by ATP, the first committing step of glycolysis. The sequence is that of ATP-dependent 6-phosphofructokinase (pfkA) from Aspergillus fumigatus (strain ATCC MYA-4609 / CBS 101355 / FGSC A1100 / Af293) (Neosartorya fumigata).